Consider the following 330-residue polypeptide: Lactamase-like protein nscB (330 aa).

Residues His-97, His-99, Asp-101, and His-102 each contribute to the Zn(2+) site. The Proton donor/acceptor role is filled by Asp-101.

Belongs to the metallo-beta-lactamase superfamily. Requires Zn(2+) as cofactor.

Its pathway is secondary metabolite biosynthesis. Lactamase-like protein; part of the gene cluster that mediates the biosynthesis of neosartoricin, a prenylated anthracenone that exhibits T-cell antiproliferative activity, suggestive of a physiological role as an immunosuppressive agent. The non-reducing polyketide synthase nscA probably synthesizes and cyclizes the decaketide backbone. The hydrolase nscB then mediates the product release through hydrolysis followed by spontaneous decarboxylation. The prenyltransferase nscD catalyzes the addition of the dimethylallyl group to the aromatic C5. The FAD-dependent monooxygenase nscC is then responsible for the stereospecific hydroxylation at C2. There is no gene encoding O-acetyltransferase in the nsc gene cluster; thus, the last step of 2-O-acetylation leading to neosartoricin may be catalyzed by an unidentified O-acetyltransferase. In Aspergillus fumigatus (strain ATCC MYA-4609 / CBS 101355 / FGSC A1100 / Af293) (Neosartorya fumigata), this protein is Lactamase-like protein nscB.